The primary structure comprises 508 residues: Maturase K (508 aa).

This sequence belongs to the intron maturase 2 family. MatK subfamily.

It is found in the plastid. Its subcellular location is the chloroplast. Functionally, usually encoded in the trnK tRNA gene intron. Probably assists in splicing its own and other chloroplast group II introns. The polypeptide is Maturase K (Wolffia arrhiza (Rootless water-meal)).